The primary structure comprises 108 residues: MTTSSYFLLVALGLLLYVCQSSFGSPHTSDSGTTLVRRRLCGSELVTYLGELCLGNRKRRGFPSMLKARAKRNEAFLLQRDGRGIVEDCCYNDCTDEKLKEYCHTLQG.

A signal peptide spans 1-24 (MTTSSYFLLVALGLLLYVCQSSFG). The propeptide occupies 25–28 (SPHT). Cystine bridges form between C41/C90, C53/C103, and C89/C94. E44 carries the post-translational modification 4-carboxyglutamate. The propeptide at 57–83 (RKRRGFPSMLKARAKRNEAFLLQRDGR) is c peptide. E87 is subject to 4-carboxyglutamate. Glutamine amide is present on Q107.

This sequence belongs to the insulin family. In terms of assembly, heterodimer of A and B chains; disulfide-linked. Expressed by the venom gland.

It is found in the secreted. In terms of biological role, this venom insulin, from a fish-hunting cone snail, facilitates prey capture by rapidly inducing hypoglycemic shock. It is one of the smallest known insulin found in nature and lacks the C-terminal segment of the B chain that, in human insulin, mediates engagement of the insulin receptor (INSR) and assembly of the hormone's hexameric storage form. Despite lacking this segment, it both binds and activates human insulin receptor (long isoform (HIR-B)) with a moderate potency (EC(50)=30.45 nM). In vivo, intraperitoneal injection of this peptide into zebrafish lowers blood glucose with a lower potency than human insulin. In addition, when applied to water, this peptide reduces overall locomotor activity of zebrafish larvae, observed as a significant decrease in the percentage of time spent swimming and movement frequency. When tested on a mouse model of diabetes, this insulin also lowers blood glucose with a 20-fold lower potency than human insulin. The sequence is that of Con-Ins K1 from Conus kinoshitai (Kinoshita's cone).